A 156-amino-acid polypeptide reads, in one-letter code: Large ribosomal subunit protein uL15 (156 aa).

The segment at 14–35 (GSRTHGWGRVGQHRKSGSSGGK) is disordered.

The protein belongs to the universal ribosomal protein uL15 family. As to quaternary structure, part of the 50S ribosomal subunit.

In terms of biological role, binds to the 23S rRNA. The chain is Large ribosomal subunit protein uL15 from Pyrobaculum islandicum (strain DSM 4184 / JCM 9189 / GEO3).